A 128-amino-acid chain; its full sequence is L-ectoine synthase (128 aa).

The protein belongs to the ectoine synthase family.

It catalyses the reaction (2S)-4-acetamido-2-aminobutanoate = L-ectoine + H2O. It participates in amine and polyamine biosynthesis; ectoine biosynthesis; L-ectoine from L-aspartate 4-semialdehyde: step 3/3. Its function is as follows. Catalyzes the circularization of gamma-N-acetyl-alpha,gamma-diaminobutyric acid (ADABA) to ectoine (1,4,5,6-tetrahydro-2-methyl-4-pyrimidine carboxylic acid), which is an excellent osmoprotectant. The sequence is that of L-ectoine synthase from Oceanobacillus iheyensis (strain DSM 14371 / CIP 107618 / JCM 11309 / KCTC 3954 / HTE831).